Here is a 161-residue protein sequence, read N- to C-terminus: GTP-dependent dephospho-CoA kinase (161 aa).

Residues Asp-40, Val-41, Val-42, Asp-59, and Glu-112 each coordinate GTP.

It belongs to the GTP-dependent DPCK family.

The enzyme catalyses 3'-dephospho-CoA + GTP = GDP + CoA + H(+). It functions in the pathway cofactor biosynthesis; coenzyme A biosynthesis. Functionally, catalyzes the GTP-dependent phosphorylation of the 3'-hydroxyl group of dephosphocoenzyme A to form coenzyme A (CoA). The chain is GTP-dependent dephospho-CoA kinase from Methanoculleus marisnigri (strain ATCC 35101 / DSM 1498 / JR1).